The primary structure comprises 360 residues: Peptide chain release factor 1 (360 aa).

At Gln235 the chain carries N5-methylglutamine. The interval 285-313 (KRQQAEASTRRNLLGSGDRSDRNRTYNFP) is disordered.

Belongs to the prokaryotic/mitochondrial release factor family. Post-translationally, methylated by PrmC. Methylation increases the termination efficiency of RF1.

The protein localises to the cytoplasm. Functionally, peptide chain release factor 1 directs the termination of translation in response to the peptide chain termination codons UAG and UAA. This Klebsiella pneumoniae (strain 342) protein is Peptide chain release factor 1.